Here is a 107-residue protein sequence, read N- to C-terminus: Large ribosomal subunit protein uL23 (107 aa).

It belongs to the universal ribosomal protein uL23 family. As to quaternary structure, part of the 50S ribosomal subunit. Contacts protein L29, and trigger factor when it is bound to the ribosome.

In terms of biological role, one of the early assembly proteins it binds 23S rRNA. One of the proteins that surrounds the polypeptide exit tunnel on the outside of the ribosome. Forms the main docking site for trigger factor binding to the ribosome. This chain is Large ribosomal subunit protein uL23, found in Gluconobacter oxydans (strain 621H) (Gluconobacter suboxydans).